The sequence spans 400 residues: NADH-quinone oxidoreductase subunit D (400 aa).

This sequence belongs to the complex I 49 kDa subunit family. As to quaternary structure, NDH-1 is composed of 14 different subunits. Subunits NuoB, C, D, E, F, and G constitute the peripheral sector of the complex.

Its subcellular location is the cell inner membrane. The enzyme catalyses a quinone + NADH + 5 H(+)(in) = a quinol + NAD(+) + 4 H(+)(out). Functionally, NDH-1 shuttles electrons from NADH, via FMN and iron-sulfur (Fe-S) centers, to quinones in the respiratory chain. The immediate electron acceptor for the enzyme in this species is believed to be a menaquinone. Couples the redox reaction to proton translocation (for every two electrons transferred, four hydrogen ions are translocated across the cytoplasmic membrane), and thus conserves the redox energy in a proton gradient. The protein is NADH-quinone oxidoreductase subunit D of Chlorobium phaeobacteroides (strain DSM 266 / SMG 266 / 2430).